We begin with the raw amino-acid sequence, 141 residues long: Hemoglobin subunit alpha-A (141 aa).

The Globin domain occupies Val1–Arg141. His58 contacts O2. His87 is a heme b binding site.

Belongs to the globin family. As to quaternary structure, heterotetramer of two alpha chains and two beta chains. As to expression, red blood cells.

Its function is as follows. Involved in oxygen transport from the lung to the various peripheral tissues. This Chloephaga melanoptera (Andean goose) protein is Hemoglobin subunit alpha-A (HBAA).